Consider the following 475-residue polypeptide: F-box protein At3g59150 (475 aa).

The region spanning 12-58 (GDVISNLPNDLLCRILSYLSTKEAALTSILSKRWSNLLLSIPILDFD) is the F-box domain.

In Arabidopsis thaliana (Mouse-ear cress), this protein is F-box protein At3g59150.